A 178-amino-acid chain; its full sequence is Actin-related protein 2/3 complex subunit 3 (178 aa).

Lys29 is covalently cross-linked (Glycyl lysine isopeptide (Lys-Gly) (interchain with G-Cter in ubiquitin)).

Belongs to the ARPC3 family. Component of the Arp2/3 complex composed of ARP2, ARP3, ARC40/p41-ARC, ARC35/p34-ARC, ARC18/p21-ARC, ARC19/p20-ARC and ARC16/p16-ARC.

It is found in the cytoplasm. Its subcellular location is the cytoskeleton. Functions as a component of the Arp2/3 complex which is involved in regulation of actin polymerization and together with an activating nucleation-promoting factor (NPF) mediates the formation of branched actin networks. The polypeptide is Actin-related protein 2/3 complex subunit 3 (ARC18) (Saccharomyces cerevisiae (strain ATCC 204508 / S288c) (Baker's yeast)).